A 764-amino-acid polypeptide reads, in one-letter code: Molybdenum cofactor sulfurase 1 (764 aa).

K228 bears the N6-(pyridoxal phosphate)lysine mark. C394 is a catalytic residue. The region spanning L607–L762 is the MOSC domain.

This sequence belongs to the class-V pyridoxal-phosphate-dependent aminotransferase family. MOCOS subfamily. The cofactor is pyridoxal 5'-phosphate.

It carries out the reaction Mo-molybdopterin + L-cysteine + AH2 = thio-Mo-molybdopterin + L-alanine + A + H2O. In terms of biological role, sulfurates the molybdenum cofactor. Sulfation of molybdenum is essential for xanthine dehydrogenase (XDH) and aldehyde oxidase (ADO) enzymes in which molybdenum cofactor is liganded by 1 oxygen and 1 sulfur atom in active form. This is Molybdenum cofactor sulfurase 1 from Aedes aegypti (Yellowfever mosquito).